A 597-amino-acid chain; its full sequence is Probable potassium transport system protein Kup 1 (597 aa).

Helical transmembrane passes span 23-43 (GAWLVIPAMLGGAAFLADSVL), 72-92 (LTMMITAVIIVILFAVQSRGT), 98-118 (VFGSVVMVWFAFLAIVGVVAI), 143-163 (ATGLALMGTVFLSTTGAEALY), 174-194 (IYFTWPFIKVALVLNYFGQGA), 226-246 (AVVLSVTAGIIASQALITGAF), 273-293 (LYIPVVNVVLCVATLAVLLLF), 303-323 (YGLALTITMITTTILLGIYLW), 329-349 (FGAVVFTIVFLAIQVLFFAAS), and 353-373 (FLHGGWFTLLLTLAILMIMYT).

This sequence belongs to the HAK/KUP transporter (TC 2.A.72) family.

It localises to the cell membrane. It catalyses the reaction K(+)(in) + H(+)(in) = K(+)(out) + H(+)(out). Transport of potassium into the cell. Likely operates as a K(+):H(+) symporter. This chain is Probable potassium transport system protein Kup 1 (kup1), found in Bifidobacterium longum (strain NCC 2705).